The sequence spans 247 residues: Ubiquinone biosynthesis O-methyltransferase (247 aa).

Positions 41, 72, 93, and 136 each coordinate S-adenosyl-L-methionine.

Belongs to the methyltransferase superfamily. UbiG/COQ3 family.

The catalysed reaction is a 3-demethylubiquinol + S-adenosyl-L-methionine = a ubiquinol + S-adenosyl-L-homocysteine + H(+). It carries out the reaction a 3-(all-trans-polyprenyl)benzene-1,2-diol + S-adenosyl-L-methionine = a 2-methoxy-6-(all-trans-polyprenyl)phenol + S-adenosyl-L-homocysteine + H(+). The protein operates within cofactor biosynthesis; ubiquinone biosynthesis. In terms of biological role, O-methyltransferase that catalyzes the 2 O-methylation steps in the ubiquinone biosynthetic pathway. This Bartonella tribocorum (strain CIP 105476 / IBS 506) protein is Ubiquinone biosynthesis O-methyltransferase.